The following is a 105-amino-acid chain: Large ribosomal subunit protein eL30 (105 aa).

This sequence belongs to the eukaryotic ribosomal protein eL30 family.

The chain is Large ribosomal subunit protein eL30 (RPL30) from Trypanosoma brucei brucei.